The primary structure comprises 705 residues: Protein artemis (705 aa).

T380 carries the post-translational modification Phosphothreonine. Position 385 is a phosphoserine (S385). Positions 451 to 462 are enriched in acidic residues; it reads EESNSDSGEELE. 3 disordered regions span residues 451–484, 535–569, and 638–675; these read EESN…NADP, PKLC…GWDS, and TLSG…AELP. Residues 546 to 559 show a composition bias toward low complexity; the sequence is THISSQNSSQSTHI. Polar residues predominate over residues 560 to 569; that stretch reads TDQGSQGWDS. Positions 652-662 are enriched in low complexity; sequence SSTRADSQSSS. S658 is subject to Phosphoserine; by ATM.

The protein belongs to the DNA repair metallo-beta-lactamase (DRMBL) family. Interacts with LIG4; the interaction is direct. Interacts with ATM. Interacts with BRCA1. Interacts with PRKDC. Interacts with TP53BP1. Also exhibits ATM- and phosphorylation-dependent interaction with the MRN complex, composed of MRE11, RAD50, and NBN. In terms of processing, phosphorylation on undefined residues by PRKDC may stimulate endonucleolytic activity on 5' and 3' hairpins and overhangs. PRKDC must remain present, even after phosphorylation, for efficient hairpin opening. Also phosphorylated by ATM in response to ionizing radiation (IR) and by ATR in response to ultraviolet (UV) radiation.

It is found in the nucleus. Functionally, required for V(D)J recombination, the process by which exons encoding the antigen-binding domains of immunoglobulins and T-cell receptor proteins are assembled from individual V, (D), and J gene segments. V(D)J recombination is initiated by the lymphoid specific RAG endonuclease complex, which generates site specific DNA double strand breaks (DSBs). These DSBs present two types of DNA end structures: hairpin sealed coding ends and phosphorylated blunt signal ends. These ends are independently repaired by the non homologous end joining (NHEJ) pathway to form coding and signal joints respectively. This protein likely exhibits single-strand specific 5'-3' exonuclease activity in isolation, and may acquire endonucleolytic activity on 5' and 3' hairpins and overhangs when in a complex with PRKDC. The latter activity may be required specifically for the resolution of closed hairpins prior to the formation of the coding joint. May also be required for the repair of complex DSBs induced by ionizing radiation, which require substantial end-processing prior to religation by NHEJ. This is Protein artemis (Dclre1c) from Mus musculus (Mouse).